A 173-amino-acid polypeptide reads, in one-letter code: Alpha-crystallin A chain (173 aa).

M1 carries the N-acetylmethionine modification. Positions 1 to 63 (MDIAIQHPWF…RSVLDSGISE (63 aa)) are required for complex formation with BFSP1 and BFSP2. Q6 bears the Deamidated glutamine; partial mark. S45 is modified (phosphoserine). Q50 carries the post-translational modification Deamidated glutamine; partial. Residues 52–162 (VFRSVLDSGI…GHSERAIPVS (111 aa)) form the sHSP domain. An N6-acetyllysine mark is found at K70 and K99. Zn(2+) is bound at residue H100. A Deamidated asparagine; partial modification is found at N101. The Zn(2+) site is built by E102 and H107. A Phosphoserine modification is found at S122. N123 bears the Deamidated asparagine; partial mark. The disordered stretch occupies residues 144–173 (PKVPSGVDAGHSERAIPVSREEKPSSAPSS). Positions 153-167 (GHSERAIPVSREEKP) are enriched in basic and acidic residues. H154 contacts Zn(2+). A glycan (O-linked (GlcNAc) serine) is linked at S162.

It belongs to the small heat shock protein (HSP20) family. Heteromer composed of three CRYAA and one CRYAB subunits. Inter-subunit bridging via zinc ions enhances stability, which is crucial as there is no protein turn over in the lens. Can also form homodimers and homotetramers (dimers of dimers) which serve as the building blocks of homooligomers. Within homooligomers, the zinc-binding motif is created from residues of 3 different molecules. His-100 and Glu-102 from one molecule are ligands of the zinc ion, and His-107 and His-154 residues from additional molecules complete the site with tetrahedral coordination geometry. Part of a complex required for lens intermediate filament formation composed of BFSP1, BFSP2 and CRYAA. Acetylation at Lys-70 may increase chaperone activity. In terms of processing, undergoes age-dependent proteolytical cleavage at the C-terminus.

It localises to the cytoplasm. It is found in the nucleus. In terms of biological role, contributes to the transparency and refractive index of the lens. Acts as a chaperone, preventing aggregation of various proteins under a wide range of stress conditions. Required for the correct formation of lens intermediate filaments as part of a complex composed of BFSP1, BFSP2 and CRYAA. This is Alpha-crystallin A chain (CRYAA) from Halichoerus grypus (Gray seal).